Reading from the N-terminus, the 665-residue chain is Translation factor GUF1 homolog, mitochondrial (665 aa).

The transit peptide at 1-35 (MAGAAVLRRSARRIYRHLAAAPAFSRSVLQQPKRL) directs the protein to the mitochondrion. The tract at residues 34–53 (RLLSSQSSPEHGARGAVSGS) is disordered. The 189-residue stretch at 61–249 (ERVRNFSIIA…AVIERIPSPP (189 aa)) folds into the tr-type G domain. GTP-binding positions include 70-77 (AHVDHGKS), 142-146 (DTPGH), and 196-199 (NKID).

This sequence belongs to the TRAFAC class translation factor GTPase superfamily. Classic translation factor GTPase family. LepA subfamily.

Its subcellular location is the mitochondrion inner membrane. The catalysed reaction is GTP + H2O = GDP + phosphate + H(+). Promotes mitochondrial protein synthesis. May act as a fidelity factor of the translation reaction, by catalyzing a one-codon backward translocation of tRNAs on improperly translocated ribosomes. Binds to mitochondrial ribosomes in a GTP-dependent manner. The protein is Translation factor GUF1 homolog, mitochondrial of Sorghum bicolor (Sorghum).